Consider the following 66-residue polypeptide: Ranalexin (66 aa).

The N-terminal stretch at 1 to 20 (MFTLKKSLLLLFFLGTINLS) is a signal peptide. Positions 21–44 (LCEEERNAEEERRDNPDERDVEVE) are cleaved as a propeptide — small acidic peptide. Cys-60 and Cys-66 are joined by a disulfide.

The protein belongs to the frog skin active peptide (FSAP) family. Brevinin subfamily. As to expression, expressed by the skin dorsal glands.

Its subcellular location is the secreted. In terms of biological role, potent microbicidal activity, active against S.aureus and E.coli. It also acts as a membrane-disruptive agent at higher concentrations. This chain is Ranalexin, found in Aquarana catesbeiana (American bullfrog).